The chain runs to 178 residues: Ribosome maturation factor RimP (178 aa).

The protein belongs to the RimP family.

The protein resides in the cytoplasm. In terms of biological role, required for maturation of 30S ribosomal subunits. The chain is Ribosome maturation factor RimP from Caulobacter vibrioides (strain ATCC 19089 / CIP 103742 / CB 15) (Caulobacter crescentus).